The following is a 440-amino-acid chain: Peroxisome proliferator-activated receptor delta (440 aa).

A disordered region spans residues 1–53 (MEQPQEETPEAREEEKEEVAMGDGAPELNGGPEHTLPSSSCADLSQNSSPSSL). Residues 36-53 (LPSSSCADLSQNSSPSSL) show a composition bias toward polar residues. The nuclear receptor DNA-binding region spans 70 to 144 (NMECRVCGDK…LGMSHNAIRF (75 aa)). 2 consecutive NR C4-type zinc fingers follow at residues 73 to 93 (CRVC…CEGC) and 110 to 132 (CDRI…FQKC). The NR LBD domain occupies 210–438 (FVIHDIETLW…HPLLQEIYKD (229 aa)).

Belongs to the nuclear hormone receptor family. NR1 subfamily. Heterodimer with the retinoid X receptor. Interacts (via domain NR LBD) with CRY1 and CRY2 in a ligand-dependent manner. Post-translationally, 'Lys-48'-linked polyubiquitinated; leading to proteasomal degradation. Deubiquitinated and stabilized by OTUD3. In terms of tissue distribution, heart, adrenal and intestine.

Its subcellular location is the nucleus. Ligand-activated transcription factor key mediator of energy metabolism in adipose tissues. Receptor that binds peroxisome proliferators such as hypolipidemic drugs and fatty acids. Has a preference for poly-unsaturated fatty acids, such as gamma-linoleic acid and eicosapentanoic acid. Once activated by a ligand, the receptor binds to promoter elements of target genes. Regulates the peroxisomal beta-oxidation pathway of fatty acids. Functions as transcription activator for the acyl-CoA oxidase gene. Decreases expression of NPC1L1 once activated by a ligand. The protein is Peroxisome proliferator-activated receptor delta (Ppard) of Mus musculus (Mouse).